Consider the following 247-residue polypeptide: MTTLFISDLHLDPARPAITELFLDFLRTQVPGSDALYILGDLFEAWIGDDTPSTAADAVAEALHAVATTGVPVFFMPGNRDFLVGAAYAQRAGFRILPDPTVIDLYGQPTLLMHGDLLCTDDTAYQAFRAQTRDPAFQAQFLSQPLAARVAFAQQARAASHARQSELKQGDQAQFETVTDVAPAEVDATFVRYGLDRIIHGHTHRPAIHIVQAGGRTCTRVVLGDWYEQGSVLRVDADGLALEQLAL.

The Mn(2+) site is built by D8, H10, D41, N79, and H114. Residue 79–80 coordinates substrate; the sequence is NR. Residues D122, S160, D171, Q174, and H202 each coordinate substrate. Positions 202 and 204 each coordinate Mn(2+).

It belongs to the LpxH family. It depends on Mn(2+) as a cofactor.

The protein localises to the cell inner membrane. It carries out the reaction UDP-2-N,3-O-bis[(3R)-3-hydroxytetradecanoyl]-alpha-D-glucosamine + H2O = 2-N,3-O-bis[(3R)-3-hydroxytetradecanoyl]-alpha-D-glucosaminyl 1-phosphate + UMP + 2 H(+). Its pathway is glycolipid biosynthesis; lipid IV(A) biosynthesis; lipid IV(A) from (3R)-3-hydroxytetradecanoyl-[acyl-carrier-protein] and UDP-N-acetyl-alpha-D-glucosamine: step 4/6. Hydrolyzes the pyrophosphate bond of UDP-2,3-diacylglucosamine to yield 2,3-diacylglucosamine 1-phosphate (lipid X) and UMP by catalyzing the attack of water at the alpha-P atom. Involved in the biosynthesis of lipid A, a phosphorylated glycolipid that anchors the lipopolysaccharide to the outer membrane of the cell. This is UDP-2,3-diacylglucosamine hydrolase from Xanthomonas campestris pv. campestris (strain B100).